Consider the following 274-residue polypeptide: Putative phosphoenolpyruvate synthase regulatory protein (274 aa).

154 to 161 contacts ADP; that stretch reads AVSRSGKT.

This sequence belongs to the pyruvate, phosphate/water dikinase regulatory protein family. PSRP subfamily.

The enzyme catalyses [pyruvate, water dikinase] + ADP = [pyruvate, water dikinase]-phosphate + AMP + H(+). It carries out the reaction [pyruvate, water dikinase]-phosphate + phosphate + H(+) = [pyruvate, water dikinase] + diphosphate. Its function is as follows. Bifunctional serine/threonine kinase and phosphorylase involved in the regulation of the phosphoenolpyruvate synthase (PEPS) by catalyzing its phosphorylation/dephosphorylation. In Alkalilimnicola ehrlichii (strain ATCC BAA-1101 / DSM 17681 / MLHE-1), this protein is Putative phosphoenolpyruvate synthase regulatory protein.